A 1220-amino-acid chain; its full sequence is Protein patched homolog 1 (1220 aa).

Residues 1–27 (MASDPRDPGPAGGVFGDLPPSYTRSPP) form a disordered region. Residues 1-84 (MASDPRDPGP…GCHIQRHCGK (84 aa)) lie on the Cytoplasmic side of the membrane. A helical membrane pass occupies residues 85-105 (VLFIGLLVFGALSVGLRVAAI). Residues 106–419 (ETDIEKLWVE…LNDIMKSFSD (314 aa)) are Extracellular-facing. N-linked (GlcNAc...) asparagine glycosylation occurs at asparagine 397. Residues 420–440 (VSVIRVAGGYLLMLAYACVTM) traverse the membrane as a helical segment. In terms of domain architecture, SSD spans 421-579 (SVIRVAGGYL…LLIFPAILSL (159 aa)). Residues 441-449 (LRWDCAKSQ) are Cytoplasmic-facing. Residues 450 to 470 (GAVGLAGVLLVALSVAAGLGL) form a helical membrane-spanning segment. Residues 471–484 (CSLLGLSFNAATTQ) are Extracellular-facing. Residues 485–505 (VLPSLALGIGVDDMFLLGHSF) form a helical membrane-spanning segment. Topologically, residues 506 to 528 (TETRSNIPFKERTGDCLRRTGTS) are cytoplasmic. A helical transmembrane segment spans residues 529–549 (VALTSVNNMIAFFMAALVPIP). The Extracellular portion of the chain corresponds to 550-558 (ALRAFSLQA). The chain crosses the membrane as a helical span at residues 559 to 579 (AVVVVFNFAMALLIFPAILSL). At 580 to 739 (DLHRREDKRL…APLLLKPETK (160 aa)) the chain is on the cytoplasmic side. Residues 740–760 (TVVVVVFVALLSLSLYGTTMV) traverse the membrane as a helical segment. Residues 761-1016 (HDGLYLTDIV…WEQYIGLRHW (256 aa)) lie on the Extracellular side of the membrane. Residues asparagine 865 and asparagine 888 are each glycosylated (N-linked (GlcNAc...) asparagine). A helical membrane pass occupies residues 1017–1037 (FLLSISVVLACTFLVCAILLL). The Cytoplasmic segment spans residues 1038–1044 (NPWTAGV). A helical membrane pass occupies residues 1045-1065 (IVFILPMMTVELFGIMGLIGI). Residues 1066 to 1072 (KLSAIPV) are Extracellular-facing. Residues 1073-1093 (VILIASVGIGVEFTVHIALGF) traverse the membrane as a helical segment. Residues 1094 to 1110 (LTAIGDRNTRSAVAMEH) lie on the Cytoplasmic side of the membrane. A helical transmembrane segment spans residues 1111-1131 (MFAPVIDGAISTLLGVLMLAG). Topologically, residues 1132-1143 (SEFDFIMRYFFA) are extracellular. A helical membrane pass occupies residues 1144–1164 (VLAILTLLGILNGLVLLPVLL). Residues 1165-1220 (SLMGPPAEVVPANNANHLQSPSPEPMPPPMNHHGYYAGHIPKASHQAFSETSDSEY) lie on the Cytoplasmic side of the membrane.

It belongs to the patched family. In terms of processing, glycosylation is necessary for SHH binding. Detected in embryonic presomitic mesoderm, neuroectoderm, tissue surrounding the notochord, ventral neural tube.

It is found in the membrane. Acts as a receptor for sonic hedgehog (SHH), indian hedgehog (IHH) and desert hedgehog (DHH). Associates with the smoothened protein (SMO) to transduce the hedgehog's proteins signal. This Danio rerio (Zebrafish) protein is Protein patched homolog 1 (ptch1).